A 171-amino-acid polypeptide reads, in one-letter code: Putative F-box protein At1g32020 (171 aa).

The 47-residue stretch at C3–K49 folds into the F-box domain.

The protein is Putative F-box protein At1g32020 of Arabidopsis thaliana (Mouse-ear cress).